Reading from the N-terminus, the 105-residue chain is Thioredoxin (105 aa).

The Thioredoxin domain maps to 2–105 (VKSVGNLADF…KLEETIKSLV (104 aa)). Active-site nucleophile residues include cysteine 32 and cysteine 35. Residues cysteine 32 and cysteine 35 are joined by a disulfide bond. 2 positions are modified to S-nitrosocysteine: cysteine 69 and cysteine 73.

Belongs to the thioredoxin family. May be nitrosylated on several cysteine residues, depending on the oxidation state. Nitrosylated Cys-73 may serve as donor for nitrosylation of target proteins.

The protein resides in the nucleus. It localises to the cytoplasm. The protein localises to the secreted. Its function is as follows. Participates in various redox reactions through the reversible oxidation of its active center dithiol to a disulfide and catalyzes dithiol-disulfide exchange reactions. Plays a role in the reversible S-nitrosylation of cysteine residues in target proteins, and thereby contributes to the response to intracellular nitric oxide. Nitrosylates the active site Cys of CASP3 in response to nitric oxide (NO), and thereby inhibits caspase-3 activity. Induces the FOS/JUN AP-1 DNA binding activity in ionizing radiation (IR) cells through its oxidation/reduction status and stimulates AP-1 transcriptional activity. The polypeptide is Thioredoxin (TXN) (Gallus gallus (Chicken)).